The chain runs to 103 residues: UPF0145 protein NT01CX_0170 (103 aa).

It belongs to the UPF0145 family.

This chain is UPF0145 protein NT01CX_0170, found in Clostridium novyi (strain NT).